The chain runs to 354 residues: Magnesium-protoporphyrin IX monomethyl ester [oxidative] cyclase 2 (354 aa).

The protein belongs to the AcsF family. It depends on Fe cation as a cofactor.

The enzyme catalyses Mg-protoporphyrin IX 13-monomethyl ester + 3 NADPH + 3 O2 + 2 H(+) = 3,8-divinyl protochlorophyllide a + 3 NADP(+) + 5 H2O. It participates in porphyrin-containing compound metabolism; chlorophyll biosynthesis (light-independent). Its function is as follows. Catalyzes the formation of the isocyclic ring in chlorophyll biosynthesis. Mediates the cyclase reaction, which results in the formation of divinylprotochlorophyllide (Pchlide) characteristic of all chlorophylls from magnesium-protoporphyrin IX 13-monomethyl ester (MgPMME). This chain is Magnesium-protoporphyrin IX monomethyl ester [oxidative] cyclase 2, found in Thermosynechococcus vestitus (strain NIES-2133 / IAM M-273 / BP-1).